Reading from the N-terminus, the 227-residue chain is Lipoprotein-releasing system ATP-binding protein LolD (227 aa).

Positions 7-227 (LSCRDLGKSY…HLQEGHLVAI (221 aa)) constitute an ABC transporter domain. 43–50 (GTSGSGKS) contributes to the ATP binding site.

It belongs to the ABC transporter superfamily. Lipoprotein translocase (TC 3.A.1.125) family. As to quaternary structure, the complex is composed of two ATP-binding proteins (LolD) and two transmembrane proteins (LolC and LolE).

The protein resides in the cell inner membrane. In terms of biological role, part of the ABC transporter complex LolCDE involved in the translocation of mature outer membrane-directed lipoproteins, from the inner membrane to the periplasmic chaperone, LolA. Responsible for the formation of the LolA-lipoprotein complex in an ATP-dependent manner. The polypeptide is Lipoprotein-releasing system ATP-binding protein LolD (Pseudomonas fluorescens (strain ATCC BAA-477 / NRRL B-23932 / Pf-5)).